Here is a 234-residue protein sequence, read N- to C-terminus: Phosphoribosylaminoimidazole-succinocarboxamide synthase (234 aa).

The protein belongs to the SAICAR synthetase family.

The catalysed reaction is 5-amino-1-(5-phospho-D-ribosyl)imidazole-4-carboxylate + L-aspartate + ATP = (2S)-2-[5-amino-1-(5-phospho-beta-D-ribosyl)imidazole-4-carboxamido]succinate + ADP + phosphate + 2 H(+). Its pathway is purine metabolism; IMP biosynthesis via de novo pathway; 5-amino-1-(5-phospho-D-ribosyl)imidazole-4-carboxamide from 5-amino-1-(5-phospho-D-ribosyl)imidazole-4-carboxylate: step 1/2. The polypeptide is Phosphoribosylaminoimidazole-succinocarboxamide synthase (Clostridium botulinum (strain ATCC 19397 / Type A)).